Reading from the N-terminus, the 265-residue chain is Mlc titration factor A (265 aa).

Residues His-111, His-148, His-152, and Glu-211 each contribute to the Zn(2+) site.

This sequence belongs to the MtfA family. Interacts with Mlc. It depends on Zn(2+) as a cofactor.

Its subcellular location is the cytoplasm. Its function is as follows. Involved in the modulation of the activity of the glucose-phosphotransferase system (glucose-PTS). Interacts with the transcriptional repressor Mlc, preventing its interaction with DNA and leading to the modulation of expression of genes regulated by Mlc, including ptsG, which encodes the PTS system glucose-specific EIICB component. Functionally, shows zinc-dependent metallopeptidase activity. The sequence is that of Mlc titration factor A from Shigella sonnei (strain Ss046).